The chain runs to 351 residues: Holliday junction branch migration complex subunit RuvB (351 aa).

The interval D4–Y199 is large ATPase domain (RuvB-L). ATP is bound by residues L38, R39, G80, K83, T84, T85, E146–Y148, R189, Y199, and R236. Position 84 (T84) interacts with Mg(2+). Residues T200 to R270 form a small ATPAse domain (RuvB-S) region. A head domain (RuvB-H) region spans residues N273–L351. Residues R328 and R333 each contribute to the DNA site.

Belongs to the RuvB family. Homohexamer. Forms an RuvA(8)-RuvB(12)-Holliday junction (HJ) complex. HJ DNA is sandwiched between 2 RuvA tetramers; dsDNA enters through RuvA and exits via RuvB. An RuvB hexamer assembles on each DNA strand where it exits the tetramer. Each RuvB hexamer is contacted by two RuvA subunits (via domain III) on 2 adjacent RuvB subunits; this complex drives branch migration. In the full resolvosome a probable DNA-RuvA(4)-RuvB(12)-RuvC(2) complex forms which resolves the HJ.

Its subcellular location is the cytoplasm. The enzyme catalyses ATP + H2O = ADP + phosphate + H(+). Its function is as follows. The RuvA-RuvB-RuvC complex processes Holliday junction (HJ) DNA during genetic recombination and DNA repair, while the RuvA-RuvB complex plays an important role in the rescue of blocked DNA replication forks via replication fork reversal (RFR). RuvA specifically binds to HJ cruciform DNA, conferring on it an open structure. The RuvB hexamer acts as an ATP-dependent pump, pulling dsDNA into and through the RuvAB complex. RuvB forms 2 homohexamers on either side of HJ DNA bound by 1 or 2 RuvA tetramers; 4 subunits per hexamer contact DNA at a time. Coordinated motions by a converter formed by DNA-disengaged RuvB subunits stimulates ATP hydrolysis and nucleotide exchange. Immobilization of the converter enables RuvB to convert the ATP-contained energy into a lever motion, pulling 2 nucleotides of DNA out of the RuvA tetramer per ATP hydrolyzed, thus driving DNA branch migration. The RuvB motors rotate together with the DNA substrate, which together with the progressing nucleotide cycle form the mechanistic basis for DNA recombination by continuous HJ branch migration. Branch migration allows RuvC to scan DNA until it finds its consensus sequence, where it cleaves and resolves cruciform DNA. This chain is Holliday junction branch migration complex subunit RuvB, found in Leuconostoc mesenteroides subsp. mesenteroides (strain ATCC 8293 / DSM 20343 / BCRC 11652 / CCM 1803 / JCM 6124 / NCDO 523 / NBRC 100496 / NCIMB 8023 / NCTC 12954 / NRRL B-1118 / 37Y).